The primary structure comprises 123 residues: Large ribosomal subunit protein uL14 (123 aa).

It belongs to the universal ribosomal protein uL14 family. Part of the 50S ribosomal subunit. Forms a cluster with proteins L3 and L19. In the 70S ribosome, L14 and L19 interact and together make contacts with the 16S rRNA in bridges B5 and B8.

Its function is as follows. Binds to 23S rRNA. Forms part of two intersubunit bridges in the 70S ribosome. The sequence is that of Large ribosomal subunit protein uL14 from Vibrio cholerae serotype O1 (strain ATCC 39541 / Classical Ogawa 395 / O395).